A 471-amino-acid polypeptide reads, in one-letter code: UDP-N-acetylmuramate--L-alanine ligase (471 aa).

114–120 (GTHGKTT) provides a ligand contact to ATP.

The protein belongs to the MurCDEF family.

It localises to the cytoplasm. It carries out the reaction UDP-N-acetyl-alpha-D-muramate + L-alanine + ATP = UDP-N-acetyl-alpha-D-muramoyl-L-alanine + ADP + phosphate + H(+). It participates in cell wall biogenesis; peptidoglycan biosynthesis. In terms of biological role, cell wall formation. The protein is UDP-N-acetylmuramate--L-alanine ligase of Chlorobaculum parvum (strain DSM 263 / NCIMB 8327) (Chlorobium vibrioforme subsp. thiosulfatophilum).